The following is a 229-amino-acid chain: Ribonuclease 3 (229 aa).

Residues 4-133 (WEELQESVGF…FIGALYLDNG (130 aa)) enclose the RNase III domain. Glu-46 serves as a coordination point for Mg(2+). Asp-50 is a catalytic residue. Mg(2+) is bound by residues Asp-119 and Glu-122. Glu-122 is an active-site residue. Positions 159-228 (DYKTQLQEIV…AQFAINQLTH (70 aa)) constitute a DRBM domain.

The protein belongs to the ribonuclease III family. As to quaternary structure, homodimer. Mg(2+) is required as a cofactor.

It is found in the cytoplasm. The enzyme catalyses Endonucleolytic cleavage to 5'-phosphomonoester.. Digests double-stranded RNA. Involved in the processing of primary rRNA transcript to yield the immediate precursors to the large and small rRNAs (23S and 16S). Processes some mRNAs, and tRNAs when they are encoded in the rRNA operon. Processes pre-crRNA and tracrRNA of type II CRISPR loci if present in the organism. The protein is Ribonuclease 3 of Listeria monocytogenes serotype 4a (strain HCC23).